A 154-amino-acid chain; its full sequence is SsrA-binding protein (154 aa).

The protein belongs to the SmpB family.

Its subcellular location is the cytoplasm. In terms of biological role, required for rescue of stalled ribosomes mediated by trans-translation. Binds to transfer-messenger RNA (tmRNA), required for stable association of tmRNA with ribosomes. tmRNA and SmpB together mimic tRNA shape, replacing the anticodon stem-loop with SmpB. tmRNA is encoded by the ssrA gene; the 2 termini fold to resemble tRNA(Ala) and it encodes a 'tag peptide', a short internal open reading frame. During trans-translation Ala-aminoacylated tmRNA acts like a tRNA, entering the A-site of stalled ribosomes, displacing the stalled mRNA. The ribosome then switches to translate the ORF on the tmRNA; the nascent peptide is terminated with the 'tag peptide' encoded by the tmRNA and targeted for degradation. The ribosome is freed to recommence translation, which seems to be the essential function of trans-translation. This chain is SsrA-binding protein, found in Synechocystis sp. (strain ATCC 27184 / PCC 6803 / Kazusa).